The sequence spans 106 residues: uORF protein (106 aa).

The segment covering 1–19 (MDLETRVSGHEKPQRRNPE) has biased composition (basic and acidic residues). The tract at residues 1 to 31 (MDLETRVSGHEKPQRRNPEDPDCQYAKTRSS) is disordered.

Its subcellular location is the host cytoplasm. It is found in the host cytoskeleton. Functionally, plays a role in viral replication. In Zika virus (ZIKV), this protein is uORF protein.